The chain runs to 532 residues: Exodeoxyribonuclease 7 large subunit (532 aa).

Residues 497-532 (AITTGEGTPAPETAAAPKKKPAKPASSDPGNQGNLF) form a disordered region. Positions 499–512 (TTGEGTPAPETAAA) are enriched in low complexity.

The protein belongs to the XseA family. In terms of assembly, heterooligomer composed of large and small subunits.

Its subcellular location is the cytoplasm. The catalysed reaction is Exonucleolytic cleavage in either 5'- to 3'- or 3'- to 5'-direction to yield nucleoside 5'-phosphates.. Its function is as follows. Bidirectionally degrades single-stranded DNA into large acid-insoluble oligonucleotides, which are then degraded further into small acid-soluble oligonucleotides. This Agrobacterium fabrum (strain C58 / ATCC 33970) (Agrobacterium tumefaciens (strain C58)) protein is Exodeoxyribonuclease 7 large subunit.